We begin with the raw amino-acid sequence, 132 residues long: Holo-[acyl-carrier-protein] synthase (132 aa).

Positions 8 and 62 each coordinate Mg(2+).

Belongs to the P-Pant transferase superfamily. AcpS family. It depends on Mg(2+) as a cofactor.

It localises to the cytoplasm. It catalyses the reaction apo-[ACP] + CoA = holo-[ACP] + adenosine 3',5'-bisphosphate + H(+). Its function is as follows. Transfers the 4'-phosphopantetheine moiety from coenzyme A to a Ser of acyl-carrier-protein. The sequence is that of Holo-[acyl-carrier-protein] synthase from Methylibium petroleiphilum (strain ATCC BAA-1232 / LMG 22953 / PM1).